The primary structure comprises 291 residues: Orotidine 5'-phosphate decarboxylase (291 aa).

The active-site Proton donor is Lys97.

The protein belongs to the OMP decarboxylase family. Type 2 subfamily.

It catalyses the reaction orotidine 5'-phosphate + H(+) = UMP + CO2. Its pathway is pyrimidine metabolism; UMP biosynthesis via de novo pathway; UMP from orotate: step 2/2. This Clostridium kluyveri (strain ATCC 8527 / DSM 555 / NBRC 12016 / NCIMB 10680 / K1) protein is Orotidine 5'-phosphate decarboxylase.